We begin with the raw amino-acid sequence, 900 residues long: Phospholipase DDHD1 (900 aa).

Disordered regions lie at residues 1 to 28 (MNYP…ELGS), 100 to 152 (LRYY…GGPA), and 202 to 233 (GARP…DEDR). Residues Ser8 and Ser11 each carry the phosphoserine modification. Over residues 130–140 (SGGGGATGGSP) the composition is skewed to gly residues. Residue Ser537 is part of the active site. The DDHD domain occupies 611–886 (LKFKVENFFC…ALFLLTFMYK (276 aa)). Disordered regions lie at residues 706 to 725 (AKEP…PSPV) and 768 to 801 (SSTT…TQTL). A compositionally biased stretch (polar residues) spans 710-725 (TSVSENEGISTIPSPV). Position 723 is a phosphoserine (Ser723). Positions 776-787 (TSKDSMEDEKKP) are enriched in basic and acidic residues. A compositionally biased stretch (polar residues) spans 791 to 801 (PSATTVGTQTL).

This sequence belongs to the PA-PLA1 family. Forms homooligomers and, to a much smaller extent, heterooligomers with DDHD2. In terms of tissue distribution, highly expressed in testis. Also expressed in brain, spleen and lung. Only expressed in cerebellum in fetal brain.

Its subcellular location is the cytoplasm. It catalyses the reaction a 1,2-diacyl-sn-glycero-3-phosphate + H2O = a 2-acyl-sn-glycerol 3-phosphate + a fatty acid + H(+). The enzyme catalyses a 1,2-diacyl-sn-glycero-3-phospho-(1D-myo-inositol) + H2O = a 2-acyl-sn-glycero-3-phospho-D-myo-inositol + a fatty acid + H(+). It carries out the reaction 1-octadecanoyl-2-(5Z,8Z,11Z,14Z-eicosatetraenoyl)-sn-glycero-3-phospho-(1D-myo-inositol) + H2O = 2-(5Z,8Z,11Z,14Z-eicosatetraenoyl)-sn-glycero-3-phospho-(1D-myo-inositol) + octadecanoate + H(+). The catalysed reaction is a 1-acyl-2-(5Z,8Z,11Z,14Z-eicosatetraenoyl)-sn-glycero-3-phospho-(1D-myo-inositol) + H2O = 2-(5Z,8Z,11Z,14Z-eicosatetraenoyl)-sn-glycero-3-phospho-(1D-myo-inositol) + a fatty acid + H(+). It catalyses the reaction 1,2-dihexadecanoyl-sn-glycero-3-phospho-(1D-myo-inositol) + H2O = 2-hexadecanoyl-sn-glycero-3-phospho-(1D-myo-inositol) + hexadecanoate + H(+). The enzyme catalyses a 1-acyl-2-(5Z,8Z,11Z,14Z)-eicosatetraenoyl-sn-glycero-3-phosphate + H2O = 2-(5Z,8Z,11Z,14Z-eicosatetraenoyl)-sn-glycero-3-phosphate + a fatty acid + H(+). It carries out the reaction 1,2-di-(9Z-octadecenoyl)-sn-glycero-3-phosphate + H2O = 2-(9Z-octadecenoyl)-sn-glycero-3-phosphate + (9Z)-octadecenoate + H(+). The catalysed reaction is 1-hexadecanoyl-2-(9Z-octadecenoyl)-sn-glycero-3-phosphate + H2O = 2-(9Z-octadecenoyl)-sn-glycero-3-phosphate + hexadecanoate + H(+). It catalyses the reaction 1-hexadecanoyl-2-(9Z-octadecenoyl)-sn-glycero-3-phospho-L-serine + H2O = 2-(9Z-octadecenoyl)-sn-glycero-3-phospho-L-serine + hexadecanoate + H(+). The enzyme catalyses 1,2-di-(5Z,8Z,11Z,14Z)-eicosatetraenoyl-sn-glycero-3-phosphate + H2O = 2-(5Z,8Z,11Z,14Z-eicosatetraenoyl)-sn-glycero-3-phosphate + (5Z,8Z,11Z,14Z)-eicosatetraenoate + H(+). It carries out the reaction 1-octadecanoyl-2-(5Z,8Z,11Z,14Z-eicosatetraenoyl)-sn-glycero-3-phosphate + H2O = 2-(5Z,8Z,11Z,14Z-eicosatetraenoyl)-sn-glycero-3-phosphate + octadecanoate + H(+). The catalysed reaction is a 1,2-diacyl-sn-glycero-3-phosphocholine + H2O = a 2-acyl-sn-glycero-3-phosphocholine + a fatty acid + H(+). It catalyses the reaction a 1,2-diacyl-sn-glycero-3-phosphoethanolamine + H2O = a 2-acyl-sn-glycero-3-phosphoethanolamine + a fatty acid + H(+). The enzyme catalyses a 1,2-diacyl-sn-glycero-3-phospho-L-serine + H2O = a 2-acyl-sn-glycero-3-phospho-L-serine + a fatty acid + H(+). It carries out the reaction a 1,2-diacyl-sn-glycero-3-phospho-(1'-sn-glycerol) + H2O = 2-acyl-sn-glycero-3-phospho-(1'-sn-glycerol) + a fatty acid + H(+). The catalysed reaction is 1-hexadecanoyl-2-(9Z-octadecenoyl)-sn-glycero-3-phospho-(1'-sn-glycerol) + H2O = 2-(9Z-octadecenoyl)-sn-glycero-3-phospho-(1'-sn-glycerol) + hexadecanoate + H(+). It catalyses the reaction 1-acyl-2-(5Z,8Z,11Z,14Z-eicosatetraenoyl)-sn-glycero-3-phosphocholine + H2O = 2-(5Z,8Z,11Z,14Z)-eicosatetraenoyl-sn-glycero-3-phosphocholine + a fatty acid + H(+). The enzyme catalyses 1-acyl-2-(5Z,8Z,11Z,14Z)-eicosatetraenoyl-sn-glycero-3-phosphoethanolamine + H2O = 2-(5Z,8Z,11Z,14Z)-eicosatetraenoyl-sn-glycero-3-phosphoethanolamine + a fatty acid + H(+). It carries out the reaction 1-(9Z-octadecenoyl)-2-(7Z,10Z,13Z,16Z,19Z-docosapentaenoyl)-sn-glycero-3-phospho-1D-myo-inositol + H2O = 2-(7Z,10Z,13Z,16Z,19Z-docosapentaenoyl)-sn-glycero-3-phospho-1D-myo-inositol + (9Z)-octadecenoate + H(+). The catalysed reaction is 1-(9Z-octadecenoyl)-2-(5Z,8Z,11Z,14Z-eicosatetraenoyl)-sn-glycero-3-phospho-1D-myo-inositol + H2O = 2-(5Z,8Z,11Z,14Z-eicosatetraenoyl)-sn-glycero-3-phospho-(1D-myo-inositol) + (9Z)-octadecenoate + H(+). It catalyses the reaction 1,2-di-(9Z-octadecenoyl)-sn-glycero-3-phospho-1D-myo-inositol + H2O = 2-(9Z-octadecenoyl)-sn-glycero-3-phospho-1D-myo-inositol + (9Z)-octadecenoate + H(+). The enzyme catalyses 1-(9Z-octadecenoyl)-2-(8Z,11Z,14Z-eicosatrienoyl)-sn-glycero-3-phospho-1D-myo-inositol + H2O = 2-(8Z,11Z,14Z-eicosatrienoyl)-sn-glycero-3-phospho-1D-myo-inositol + (9Z)-octadecenoate + H(+). It carries out the reaction 1,2-di-(9Z-octadecenoyl)-sn-glycero-3-phosphocholine + H2O = (9Z-octadecenoyl)-sn-glycero-3-phosphocholine + (9Z)-octadecenoate + H(+). The protein operates within phospholipid metabolism; phosphatidylinositol metabolism. Its activity is regulated as follows. Phosphatidate (1,2-diacyl-sn-glycero-3-phosphate, PA) can positively regulate phospholipase A1 activity. Phospholipase A1 (PLA1) that hydrolyzes ester bonds at the sn-1 position of glycerophospholipids producing a free fatty acid and a lysophospholipid. Prefers phosphatidate (1,2-diacyl-sn-glycero-3-phosphate, PA) as substrate in vitro, but can efficiently hydrolyze phosphatidylinositol (1,2-diacyl-sn-glycero-3-phospho-(1D-myo-inositol), PI), as well as a range of other glycerophospholipid substrates such as phosphatidylcholine (1,2-diacyl-sn-glycero-3-phosphocholine, PC), phosphatidylethanolamine (1,2-diacyl-sn-glycero-3-phosphoethanolamine, PE), phosphatidylserine (1,2-diacyl-sn-glycero-3-phospho-L-serine, PS) and phosphatidylglycerol (1,2-diacyl-sn-glycero-3-phospho-(1'-sn-glycerol), PG). Involved in the regulation of the endogenous content of polyunsaturated PI and PS lipids in the nervous system. Changes in these lipids extend to downstream metabolic products like PI phosphates PIP and PIP2, which play fundamental roles in cell biology. Regulates mitochondrial morphology. These dynamic changes may be due to PA hydrolysis at the mitochondrial surface. May play a regulatory role in spermatogenesis or sperm function. In Homo sapiens (Human), this protein is Phospholipase DDHD1.